A 467-amino-acid polypeptide reads, in one-letter code: MQTRRRLHQTDQQDYSSSSTYTIQEDQQGGAGAGSVGTGTAGGSVGLLAQSLVPPPTGHEAAIHIGDNYQSGDSISTPDYSDDKYGKAARQWNLRAFSGHALRTLSAAAAVVTGNQPGINNDSQSNYSYPASIPTSSQFYQSKEEPQETEPEPEIFVMAARDRTGEFANAIRSLQARNITRAVNIRDPRKAKQVQSYSEFMMVARFIGKNIASTYAKLEKLTMLAKKKSLFDDRPQEIQELTYIIKGDLNALNQQIARLQDISKDQRRHTNGKHLVSHSSNMVLALQSKLASMSTDFKQILEVRTENLKQQKTRRDQFSQGPGPLAAHTVSPSTAKQGSLLLSEENQAVSIDMGSSDTTPLLSTQTQMAIYDDSDNYVQQRAETMQNIESTIVELGGIFQQLAHMVKEQEEIVERIDTNVADAELNIEAAHGEILKYFQSVSKNRWLMIKIFGVLIFFFLFFVVFMS.

Disordered regions lie at residues 1 to 53 (MQTR…QSLV) and 58 to 77 (GHEAAIHIGDNYQSGDSIST). Topologically, residues 1 to 445 (MQTRRRLHQT…KYFQSVSKNR (445 aa)) are cytoplasmic. Over residues 10 to 22 (TDQQDYSSSSTYT) the composition is skewed to low complexity. Residues 29-45 (GGAGAGSVGTGTAGGSV) are compositionally biased toward gly residues. A compositionally biased stretch (polar residues) spans 68 to 77 (NYQSGDSIST). The stretch at 245 to 269 (IKGDLNALNQQIARLQDISKDQRRH) forms a coiled coil. The segment at 310–335 (QQKTRRDQFSQGPGPLAAHTVSPSTA) is disordered. The t-SNARE coiled-coil homology domain maps to 375-437 (DNYVQQRAET…EAAHGEILKY (63 aa)). The chain crosses the membrane as a helical; Anchor for type IV membrane protein span at residues 446-466 (WLMIKIFGVLIFFFLFFVVFM). Ser-467 is a topological domain (vesicular).

Belongs to the syntaxin family. Homodimer.

Its subcellular location is the golgi apparatus. It localises to the cis-Golgi network membrane. Functionally, mediates endoplasmic reticulum to Golgi transport. This chain is Syntaxin-5, found in Drosophila melanogaster (Fruit fly).